Here is a 646-residue protein sequence, read N- to C-terminus: FAD-binding monooxygenase prhK (646 aa).

An N-linked (GlcNAc...) asparagine glycan is attached at Asn-46. A helical membrane pass occupies residues 80–97 (IIIIGAGFGGLLFAVRLI). Residues 119–122 (TWYW), 131–132 (DT), and Tyr-137 contribute to the FAD site. Residue 129–131 (MCD) coordinates NADP(+). NADP(+)-binding positions include 275–281 (TGATAIQ) and 298–299 (RT). Asn-429, Asn-483, and Asn-529 each carry an N-linked (GlcNAc...) asparagine glycan.

This sequence belongs to the FAD-binding monooxygenase family. It depends on FAD as a cofactor.

The protein localises to the membrane. The enzyme catalyses preaustinoid A + AH2 + O2 = preaustinoid A1 + A + H2O. The protein operates within secondary metabolite biosynthesis; terpenoid biosynthesis. FAD-binding monooxygenase; part of the gene cluster that mediates the biosynthesis of paraherquonin, a meroterpenoid with a unique, highly congested hexacyclic molecular architecture. The first step of the pathway is the synthesis of 3,5-dimethylorsellinic acid (DMOA) by the polyketide synthase prhL. Synthesis of DMOA is followed by farnesylation by the prenyltransferase prhE, methylesterification by the methyl-transferase prhM, epoxidation of the prenyl chain by the flavin-dependent monooxygenase prhF, and cyclization of the farnesyl moiety by the terpene cyclase prhH, to yield the tetracyclic intermediate, protoaustinoid A. The short chain dehydrogenase prhI then oxidizes the C-3 alcohol group of the terpene cyclase product to transform protoaustinoid A into protoaustinoid B. The FAD-binding monooxygenase prhJ catalyzes the oxidation of protoaustinoid B into preaustinoid A which is further oxidized into preaustinoid A1 by FAD-binding monooxygenase phrK. Finally, prhA leads to berkeleydione via the berkeleyone B intermediate. PrhA is a multifunctional dioxygenase that first desaturates at C5-C6 to form berkeleyone B, followed by rearrangement of the A/B-ring to form the cycloheptadiene moiety in berkeleydione. Berkeleydione serves as the key intermediate for the biosynthesis of paraherquonin as well as many other meroterpenoids. The cytochrome P450 monooxygenases prhB, prhD, and prhN, as well as the isomerase prhC, are probably involved in the late stage of paraherquonin biosynthesis, after the production of berkeleydione. Especially prhC might be a multifunctional enzyme that catalyzes the D-ring expansion via intramolecular methoxy rearrangement, as well as the hydrolysis of the expanded D-ring. The chain is FAD-binding monooxygenase prhK from Penicillium brasilianum.